A 156-amino-acid polypeptide reads, in one-letter code: Small ribosomal subunit protein uS7 (156 aa).

The protein belongs to the universal ribosomal protein uS7 family. In terms of assembly, part of the 30S ribosomal subunit. Contacts proteins S9 and S11.

Its function is as follows. One of the primary rRNA binding proteins, it binds directly to 16S rRNA where it nucleates assembly of the head domain of the 30S subunit. Is located at the subunit interface close to the decoding center, probably blocks exit of the E-site tRNA. The polypeptide is Small ribosomal subunit protein uS7 (Buchnera aphidicola subsp. Acyrthosiphon pisum (strain Tuc7)).